A 588-amino-acid chain; its full sequence is Pescadillo homolog (588 aa).

Positions 1–54 (MGGLEKKKYERGSATNYITRNKARKKLQLSLADFRRLCILKGIYPHEPKHKKKV) are required for 28S ribosomal RNA processing. Residues 1–257 (MGGLEKKKYE…PKLEGQAQAE (257 aa)) form a sufficient for nucleolar localization region. K98 bears the N6-acetyllysine mark. A disordered region spans residues 294–314 (EAEVDEFPTDGEMSAQEEDRR). Residues 306–415 (MSAQEEDRRK…LLLPVAEYFS (110 aa)) are sufficient for interaction with MAP1B. Residues 322 to 415 (KHKKLFEGLK…LLLPVAEYFS (94 aa)) enclose the BRCT domain. The tract at residues 448-515 (GEDPGNLNES…GKKPRVMAGT (68 aa)) is disordered. Residues 456-486 (ESEEEEEEDDNNEGDGDEEGENEEEEEDAEA) show a composition bias toward acidic residues. Residues 487-508 (GSEKEEEARLAALEEQRMEGKK) are compositionally biased toward basic and acidic residues. K517 is covalently cross-linked (Glycyl lysine isopeptide (Lys-Gly) (interchain with G-Cter in SUMO1); alternate). K517 is covalently cross-linked (Glycyl lysine isopeptide (Lys-Gly) (interchain with G-Cter in SUMO2); alternate). Positions 539–588 (MMKKREKYLYQKIMFGKRRKIREANKLAEKRKAHDEAVRSEKKAKKARPE) are required for 28S ribosomal RNA processing. The disordered stretch occupies residues 565–588 (LAEKRKAHDEAVRSEKKAKKARPE).

It belongs to the pescadillo family. As to quaternary structure, component of the PeBoW complex, composed of BOP1, PES1 and WDR12. The complex is held together by BOP1, which interacts with PES1 via its N-terminal domain and with WDR12 via a high-affinity interaction between the seven-bladed beta-propeller domains of the 2 proteins. The PeBoW complex associates with the 66S pre-ribosome. The PeBoW complex also associates with DDX27, PES1 interacts directly with DDX27. Interacts with IRS1 and UBTF. May interact with MAP1B. In terms of processing, sumoylated. As to expression, significant levels are detected in a variety of cancer cell lines, including glioblastoma, breast carcinoma, colon carcinoma and cervical carcinoma cells. Levels are abnormally elevated in malignant tumors of astrocytic origin.

The protein localises to the nucleus. It localises to the nucleolus. The protein resides in the nucleoplasm. Its subcellular location is the chromosome. Component of the PeBoW complex, which is required for maturation of 28S and 5.8S ribosomal RNAs and formation of the 60S ribosome. The protein is Pescadillo homolog of Homo sapiens (Human).